A 479-amino-acid chain; its full sequence is Probable acyl-CoA desaturase (479 aa).

A compositionally biased stretch (low complexity) spans 1-18 (MTAPSATAFSSATTQPTT). A disordered region spans residues 1 to 28 (MTAPSATAFSSATTQPTTEGNASMRKRT). The Cytoplasmic portion of the chain corresponds to 1–61 (MTAPSATAFS…PWTMQNWWRH (61 aa)). The helical transmembrane segment at 62 to 82 (LNWLHCMLIFGLPMIAIYGVF) threads the bilayer. Topologically, residues 83-89 (TTPLQTK) are lumenal. The chain crosses the membrane as a helical span at residues 90–110 (TLIFAIIYYAYSGLGITAGYH). 5 residues coordinate Fe cation: H110, H115, H147, H150, and H151. Residues 110-115 (HRLWSH) carry the Histidine box-1 motif. The Cytoplasmic segment spans residues 111-204 (RLWSHRAYKA…DPFVMFNHRH (94 aa)). Residues 147–151 (HRAHH) carry the Histidine box-2 motif. The chain crosses the membrane as a helical span at residues 205-225 (FLPIASFMAFIFPSLFCGLLW). Topologically, residues 226–229 (GDYR) are lumenal. The chain crosses the membrane as a helical span at residues 230 to 250 (GGYFYAGVCRLVFVHHATFCV). At 251-479 (NSLAHLIGSQ…QPPIEAAAAN (229 aa)) the chain is on the cytoplasmic side. Positions 255, 284, 287, and 288 each coordinate Fe cation. A Histidine box-3 motif is present at residues 284-288 (HNYHH). In terms of domain architecture, Cytochrome b5 heme-binding spans 357 to 433 (QLPVMEFEDF…LSTYRVAVVR (77 aa)). Heme-binding residues include H390 and H416.

It belongs to the fatty acid desaturase type 1 family. Fe(2+) is required as a cofactor.

It is found in the membrane. It catalyses the reaction octadecanoyl-CoA + 2 Fe(II)-[cytochrome b5] + O2 + 2 H(+) = (9Z)-octadecenoyl-CoA + 2 Fe(III)-[cytochrome b5] + 2 H2O. Its function is as follows. Stearoyl-CoA desaturase that utilizes O(2) and electrons from reduced cytochrome b5 to introduce the first double bond into saturated fatty acyl-CoA substrates. Catalyzes the insertion of a cis double bond at the delta-9 position into fatty acyl-CoA substrates including palmitoyl-CoA and stearoyl-CoA. Contributes to the biosynthesis of membrane phospholipids, cholesterol esters and triglycerides. The sequence is that of Probable acyl-CoA desaturase from Schizosaccharomyces pombe (strain 972 / ATCC 24843) (Fission yeast).